Here is a 526-residue protein sequence, read N- to C-terminus: Tyrosine-protein kinase transforming protein Src (526 aa).

Positions Met-1 to Glu-57 are disordered. Gly-2 carries N-myristoyl glycine; by host lipidation. Over residues Lys-7–His-25 the composition is skewed to basic and acidic residues. Residues Gly-81 to Ser-142 enclose the SH3 domain. Positions Trp-148–Cys-245 constitute an SH2 domain. The Protein kinase domain maps to Leu-267–Leu-517. ATP contacts are provided by residues Leu-273–Val-281 and Lys-295. The Proton acceptor role is filled by Asp-386. Tyr-416 carries the post-translational modification Phosphotyrosine; by autocatalysis.

This sequence belongs to the protein kinase superfamily. Tyr protein kinase family. SRC subfamily. The phosphorylated form is termed pp60v-src.

The enzyme catalyses L-tyrosyl-[protein] + ATP = O-phospho-L-tyrosyl-[protein] + ADP + H(+). In terms of biological role, this phosphoprotein, required for both the initiation and the maintenance of neoplastic transformation, is a protein kinase that catalyzes the phosphorylation of tyrosine residues in vitro. This is Tyrosine-protein kinase transforming protein Src (V-SRC) from Galliformes.